The following is an 813-amino-acid chain: Leucine--tRNA ligase (813 aa).

The 'HIGH' region signature appears at 41–51 (PYPSGTLHMGH). Residues 575 to 579 (KMSKS) carry the 'KMSKS' region motif. Lys578 is a binding site for ATP.

Belongs to the class-I aminoacyl-tRNA synthetase family.

The protein resides in the cytoplasm. The catalysed reaction is tRNA(Leu) + L-leucine + ATP = L-leucyl-tRNA(Leu) + AMP + diphosphate. In Francisella philomiragia subsp. philomiragia (strain ATCC 25017 / CCUG 19701 / FSC 153 / O#319-036), this protein is Leucine--tRNA ligase.